The primary structure comprises 152 residues: Superoxide dismutase [Cu-Zn] (152 aa).

Residues histidine 45, histidine 47, and histidine 62 each coordinate Cu cation. A disulfide bond links cysteine 56 and cysteine 145. Zn(2+) contacts are provided by histidine 62, histidine 70, histidine 79, and aspartate 82. Histidine 119 is a binding site for Cu cation.

The protein belongs to the Cu-Zn superoxide dismutase family. Homodimer. It depends on Cu cation as a cofactor. Requires Zn(2+) as cofactor.

It is found in the cytoplasm. It catalyses the reaction 2 superoxide + 2 H(+) = H2O2 + O2. Destroys radicals which are normally produced within the cells and which are toxic to biological systems. In Capsicum annuum (Capsicum pepper), this protein is Superoxide dismutase [Cu-Zn] (SODCC).